We begin with the raw amino-acid sequence, 432 residues long: MMEKLKEIEKVTKAIKEKILNHYGYIRVITHHDTDGLSSGGILAKMLMRTNKLFHLTVVEHLSKEVIEKLAKENEVNKPLFIFADMGSGQIEEIIKHNFNAIILDHHPPVIKDSFINENIIQLNPHIFGVDGSREITASGVCYLVAREFGYYDLSVLAIVGIIGDMQYNPLLGLNKFIVNEAREYRYVKIMNDIVYNIYDVEIYKAIAYCTKPYIPDLASEGKAFKFLKDIGIDPNKKQLDDTDKKKLLSAIIFKYPKIENLLIDRYLIEHKVRDAFLLSEMLNAVGRNGLFAVGIGICLEDDECIKIGNQILWEYKKNLINELKSVKLKKLNNIYYFEGKKGMIGIIASILVDDKPVIGYHIEGDIAKFSARGNRDLVNRGLNLSVAMAVAKEFGGNGGGHDVASGAVVSKDKVQEFLKRVDEIIGEQLRR.

To M.jannaschii MJ0977.

This is an uncharacterized protein from Methanocaldococcus jannaschii (strain ATCC 43067 / DSM 2661 / JAL-1 / JCM 10045 / NBRC 100440) (Methanococcus jannaschii).